The following is a 466-amino-acid chain: Asparagine--tRNA ligase (466 aa).

The protein belongs to the class-II aminoacyl-tRNA synthetase family. In terms of assembly, homodimer.

The protein localises to the cytoplasm. It carries out the reaction tRNA(Asn) + L-asparagine + ATP = L-asparaginyl-tRNA(Asn) + AMP + diphosphate + H(+). The protein is Asparagine--tRNA ligase of Salmonella paratyphi A (strain ATCC 9150 / SARB42).